A 126-amino-acid chain; its full sequence is Aspartate 1-decarboxylase (126 aa).

The active-site Schiff-base intermediate with substrate; via pyruvic acid is the S25. Pyruvic acid (Ser) is present on S25. Position 57 (T57) interacts with substrate. Y58 functions as the Proton donor in the catalytic mechanism. Substrate is bound at residue 73 to 75; it reads GAA.

Belongs to the PanD family. Heterooctamer of four alpha and four beta subunits. It depends on pyruvate as a cofactor. Is synthesized initially as an inactive proenzyme, which is activated by self-cleavage at a specific serine bond to produce a beta-subunit with a hydroxyl group at its C-terminus and an alpha-subunit with a pyruvoyl group at its N-terminus.

The protein resides in the cytoplasm. The catalysed reaction is L-aspartate + H(+) = beta-alanine + CO2. It participates in cofactor biosynthesis; (R)-pantothenate biosynthesis; beta-alanine from L-aspartate: step 1/1. Its function is as follows. Catalyzes the pyruvoyl-dependent decarboxylation of aspartate to produce beta-alanine. In Serratia proteamaculans (strain 568), this protein is Aspartate 1-decarboxylase.